Reading from the N-terminus, the 297-residue chain is Protease HtpX homolog (297 aa).

2 helical membrane passes run 14-34 (VILL…AGYL) and 39-59 (YQLG…SMIF). Residue His143 coordinates Zn(2+). The active site involves Glu144. His147 is a Zn(2+) binding site. The next 2 helical transmembrane spans lie at 158–178 (IAVA…RMMW) and 193–213 (GFGA…PLAA). Residue Glu225 coordinates Zn(2+).

Belongs to the peptidase M48B family. Requires Zn(2+) as cofactor.

The protein resides in the cell membrane. The polypeptide is Protease HtpX homolog (Streptococcus equi subsp. equi (strain 4047)).